The sequence spans 429 residues: 3-phosphoshikimate 1-carboxyvinyltransferase (429 aa).

Residues Lys25, Ser26, and Arg30 each coordinate 3-phosphoshikimate. Lys25 lines the phosphoenolpyruvate pocket. Positions 99 and 127 each coordinate phosphoenolpyruvate. Residues Ser173, Ser174, Gln175, Ser201, Asp317, Asn340, and Lys344 each contribute to the 3-phosphoshikimate site. A phosphoenolpyruvate-binding site is contributed by Gln175. The active-site Proton acceptor is Asp317. 3 residues coordinate phosphoenolpyruvate: Arg348, Arg390, and Lys415.

The protein belongs to the EPSP synthase family. In terms of assembly, monomer.

Its subcellular location is the cytoplasm. It catalyses the reaction 3-phosphoshikimate + phosphoenolpyruvate = 5-O-(1-carboxyvinyl)-3-phosphoshikimate + phosphate. It functions in the pathway metabolic intermediate biosynthesis; chorismate biosynthesis; chorismate from D-erythrose 4-phosphate and phosphoenolpyruvate: step 6/7. Its function is as follows. Catalyzes the transfer of the enolpyruvyl moiety of phosphoenolpyruvate (PEP) to the 5-hydroxyl of shikimate-3-phosphate (S3P) to produce enolpyruvyl shikimate-3-phosphate and inorganic phosphate. This chain is 3-phosphoshikimate 1-carboxyvinyltransferase, found in Pseudoalteromonas atlantica (strain T6c / ATCC BAA-1087).